The primary structure comprises 891 residues: MSLRIDVDTNFPECVVDAGKVTLGTQQRQEMDPRLREKQNEIILRAVCALLNSGGGIIKAEIENKGYNYERHGVGLDVPPIFRSHLDKMQKENHFLIFVKSWNTEAGVPLATLCSNLYHRERTSTDVMDSQEALAFLKCRTQTPTNINVSNSLGPQAAQGSVQYEGNINVSAAALFDRKRLQYLEKLNLPESTHVEFVMFSTDVSHCVKDRLPKCVSAFANTEGGYVFFGVHDETCQVIGCEKEKIDLTSLRASIDGCIKKLPVHHFCTQRPEIKYVLNFLEVHDKGALRGYVCAIKVEKFCCAVFAKVPSSWQVKDNRVRQLPTREWTAWMMEADPDLSRCPEMVLQLSLSSATPRSKPVCIHKNSECLKEQQKRYFPVFSDRVVYTPESLYKELFSQHKGLRDLINTEMRPFSQGILIFSQSWAVDLGLQEKQGVICDALLISQNNTPILYTIFSKWDAGCKGYSMIVAYSLKQKLVNKGGYTGRLCITPLVCVLNSDRKAQSVYSSYLQIYPESYNFMTPQHMEALLQSLVIVLLGFKSFLSEELGSEVLNLLTNKQYELLSKNLRKTRELFVHGLPGSGKTILALRIMEKIRNVFHCEPANILYICENQPLKKLVSFSKKNICQPVTRKTFMKNNFEHIQHIIIDDAQNFRTEDGDWYGKAKFITQTARDGPGVLWIFLDYFQTYHLSCSGLPPPSDQYPREEINRVVRNAGPIANYLQQVMQEARQNPPPNLPPGSLVMLYEPKWAQGVPGNLEIIEDLNLEEILIYVANKCRFLLRNGYSPKDIAVLFTKASEVEKYKDRLLTAMRKRKLSQLHEESDLLLQIGDASDVLTDHIVLDSVCRFSGLERNIVFGINPGVAPPAGAYNLLLCLASRAKRHLYILKASV.

A Glycyl lysine isopeptide (Lys-Gly) (interchain with G-Cter in SUMO2) cross-link involves residue lysine 59. 578–585 (GLPGSGKT) is a binding site for ATP.

This sequence belongs to the Schlafen family. Subgroup III subfamily.

May have a role in hematopoietic cell differentiation. The protein is Schlafen family member 5 (SLFN5) of Homo sapiens (Human).